The primary structure comprises 44 residues: Photosystem I reaction center subunit IX (44 aa).

The helical transmembrane segment at 7–27 threads the bilayer; it reads YLSTVPVLTTLWFGSLAGLLI.

Belongs to the PsaJ family.

It is found in the plastid. The protein localises to the chloroplast thylakoid membrane. May help in the organization of the PsaE and PsaF subunits. This is Photosystem I reaction center subunit IX from Dioscorea elephantipes (Elephant's foot yam).